Reading from the N-terminus, the 326-residue chain is tRNA-modifying protein YgfZ (326 aa).

Residues W27 and W189 each contribute to the folate site.

The protein belongs to the tRNA-modifying YgfZ family.

The protein resides in the cytoplasm. Folate-binding protein involved in regulating the level of ATP-DnaA and in the modification of some tRNAs. It is probably a key factor in regulatory networks that act via tRNA modification, such as initiation of chromosomal replication. This Escherichia coli (strain SMS-3-5 / SECEC) protein is tRNA-modifying protein YgfZ.